Here is a 314-residue protein sequence, read N- to C-terminus: Melanoma-associated antigen 3 (314 aa).

Basic and acidic residues predominate over residues 1–20 (MPLEQRSQHCKPEEGLEARG). Residues 1-99 (MPLEQRSQHC…QEEEGPSTFP (99 aa)) form a disordered region. Residues 21 to 44 (EALGLVGAQAPATEEQEAASSSST) show a composition bias toward low complexity. Over residues 65 to 87 (PQGASSLPTTMNYPLWSQSYEDS) the composition is skewed to polar residues. The region spanning 109–308 (LSRKVAELVH…ISYPPLHEWV (200 aa)) is the MAGE domain.

As to quaternary structure, interacts with TRIM28. In terms of processing, ubiquitinated by the DCX(DCAF12) complex specifically recognizes the diglutamate (Glu-Glu) at the C-terminus, leading to its degradation. As to expression, expressed in many tumors of several types, such as melanoma, head and neck squamous cell carcinoma, lung carcinoma and breast carcinoma, but not in normal tissues except for testes and placenta. Never expressed in kidney tumors, Leukemias and lymphomas.

Activator of ubiquitin ligase activity of RING-type zinc finger-containing E3 ubiquitin-protein ligases that acts as a repressor of autophagy. May enhance ubiquitin ligase activity of TRIM28 and stimulate p53/TP53 ubiquitination by TRIM28. Proposed to act through recruitment and/or stabilization of the Ubl-conjugating enzyme (E2) at the E3:substrate complex. May play a role in embryonal development and tumor transformation or aspects of tumor progression. In vitro promotes cell viability in melanoma cell lines. Antigen recognized on a melanoma by autologous cytolytic T-lymphocytes. The protein is Melanoma-associated antigen 3 of Homo sapiens (Human).